The primary structure comprises 942 residues: Protein inturned (942 aa).

Basic and acidic residues predominate over residues 1–13 (MADPARRDPRGRA). 2 disordered regions span residues 1–54 (MADP…LEPE) and 129–150 (PKRHHKKKSSNTGPVSILKHQS). Acidic residues predominate over residues 22-32 (SQEEEEEESDS). The segment covering 33–48 (DAGASSLGSCSSASSD) has biased composition (low complexity). A compositionally biased stretch (polar residues) spans 138–150 (SNTGPVSILKHQS). In terms of domain architecture, PDZ spans 189-267 (LVGVIHQTKW…PMQVKLTFEN (79 aa)). Residues serine 674 and serine 678 each carry the phosphoserine modification. The segment at 707–752 (KARKPSPSRIGGGREPGEGEENVGLSPHTTPDTVRKQRESEGSDDN) is disordered.

It belongs to the inturned family. Component of the CPLANE (ciliogenesis and planar polarity effectors) complex, composed of INTU, FUZ and WDPCP. Interacts with CPLANE1. Interacts with NPHP4 and DAAM1; INTU is mediating the interaction between NPHP4 and DAAM1.

The protein localises to the cytoplasm. It is found in the cell surface. Its subcellular location is the cytoskeleton. It localises to the cilium basal body. The protein resides in the microtubule organizing center. The protein localises to the centrosome. It is found in the centriole. Plays a key role in ciliogenesis and embryonic development. Regulator of cilia formation by controlling the organization of the apical actin cytoskeleton and the positioning of the basal bodies at the apical cell surface, which in turn is essential for the normal orientation of elongating ciliary microtubules. Plays a key role in definition of cell polarity via its role in ciliogenesis but not via conversion extension. Has an indirect effect on hedgehog signaling. Proposed to function as core component of the CPLANE (ciliogenesis and planar polarity effectors) complex involved in the recruitment of peripheral IFT-A proteins to basal bodies. Required for recruitment of CPLANE2 to the mother centriole. Binds phosphatidylinositol 3-phosphate with highest affinity, followed by phosphatidylinositol 4-phosphate and phosphatidylinositol 5-phosphate. This is Protein inturned (Intu) from Rattus norvegicus (Rat).